Consider the following 141-residue polypeptide: Large ribosomal subunit protein uL11c (141 aa).

The protein belongs to the universal ribosomal protein uL11 family. As to quaternary structure, part of the ribosomal stalk of the 50S ribosomal subunit. Interacts with L10 and the large rRNA to form the base of the stalk. L10 forms an elongated spine to which L12 dimers bind in a sequential fashion forming a multimeric L10(L12)X complex.

It localises to the plastid. The protein localises to the chloroplast. In terms of biological role, forms part of the ribosomal stalk which helps the ribosome interact with GTP-bound translation factors. The protein is Large ribosomal subunit protein uL11c of Pyropia yezoensis (Susabi-nori).